A 377-amino-acid polypeptide reads, in one-letter code: ATP phosphoribosyltransferase regulatory subunit (377 aa).

Belongs to the class-II aminoacyl-tRNA synthetase family. HisZ subfamily. As to quaternary structure, heteromultimer composed of HisG and HisZ subunits.

Its subcellular location is the cytoplasm. The protein operates within amino-acid biosynthesis; L-histidine biosynthesis; L-histidine from 5-phospho-alpha-D-ribose 1-diphosphate: step 1/9. Functionally, required for the first step of histidine biosynthesis. May allow the feedback regulation of ATP phosphoribosyltransferase activity by histidine. This is ATP phosphoribosyltransferase regulatory subunit from Sinorhizobium medicae (strain WSM419) (Ensifer medicae).